A 248-amino-acid polypeptide reads, in one-letter code: 1-(5-phosphoribosyl)-5-[(5-phosphoribosylamino)methylideneamino] imidazole-4-carboxamide isomerase (248 aa).

Asp-8 serves as the catalytic Proton acceptor. Residue Asp-129 is the Proton donor of the active site.

It belongs to the HisA/HisF family.

The protein resides in the cytoplasm. It carries out the reaction 1-(5-phospho-beta-D-ribosyl)-5-[(5-phospho-beta-D-ribosylamino)methylideneamino]imidazole-4-carboxamide = 5-[(5-phospho-1-deoxy-D-ribulos-1-ylimino)methylamino]-1-(5-phospho-beta-D-ribosyl)imidazole-4-carboxamide. Its pathway is amino-acid biosynthesis; L-histidine biosynthesis; L-histidine from 5-phospho-alpha-D-ribose 1-diphosphate: step 4/9. In Rhizobium etli (strain ATCC 51251 / DSM 11541 / JCM 21823 / NBRC 15573 / CFN 42), this protein is 1-(5-phosphoribosyl)-5-[(5-phosphoribosylamino)methylideneamino] imidazole-4-carboxamide isomerase.